The following is a 355-amino-acid chain: 3-isopropylmalate dehydrogenase (355 aa).

Substrate contacts are provided by arginine 90, arginine 100, arginine 128, and aspartate 222. Residues aspartate 222, aspartate 246, and aspartate 250 each contribute to the Mg(2+) site. NAD(+) is bound at residue 280–292 (GSAPDIAGKGIAN).

It belongs to the isocitrate and isopropylmalate dehydrogenases family. LeuB type 1 subfamily. As to quaternary structure, homodimer. Mg(2+) is required as a cofactor. Mn(2+) serves as cofactor.

Its subcellular location is the cytoplasm. The enzyme catalyses (2R,3S)-3-isopropylmalate + NAD(+) = 4-methyl-2-oxopentanoate + CO2 + NADH. Its pathway is amino-acid biosynthesis; L-leucine biosynthesis; L-leucine from 3-methyl-2-oxobutanoate: step 3/4. Functionally, catalyzes the oxidation of 3-carboxy-2-hydroxy-4-methylpentanoate (3-isopropylmalate) to 3-carboxy-4-methyl-2-oxopentanoate. The product decarboxylates to 4-methyl-2 oxopentanoate. In Burkholderia mallei (strain ATCC 23344), this protein is 3-isopropylmalate dehydrogenase.